A 232-amino-acid polypeptide reads, in one-letter code: 2,3-bisphosphoglycerate-dependent phosphoglycerate mutase (232 aa).

Residues 10–17, 23–24, Arg-62, 89–92, Lys-100, 116–117, and 186–187 contribute to the substrate site; these read RHGESQWN, TG, ERHY, RR, and GN. The active-site Tele-phosphohistidine intermediate is the His-11. Residue Glu-89 is the Proton donor/acceptor of the active site.

The protein belongs to the phosphoglycerate mutase family. BPG-dependent PGAM subfamily. In terms of assembly, homodimer.

The catalysed reaction is (2R)-2-phosphoglycerate = (2R)-3-phosphoglycerate. The protein operates within carbohydrate degradation; glycolysis; pyruvate from D-glyceraldehyde 3-phosphate: step 3/5. In terms of biological role, catalyzes the interconversion of 2-phosphoglycerate and 3-phosphoglycerate. This Blochmanniella pennsylvanica (strain BPEN) protein is 2,3-bisphosphoglycerate-dependent phosphoglycerate mutase.